A 95-amino-acid polypeptide reads, in one-letter code: Aspartyl/glutamyl-tRNA(Asn/Gln) amidotransferase subunit C (95 aa).

The protein belongs to the GatC family. In terms of assembly, heterotrimer of A, B and C subunits.

It catalyses the reaction L-glutamyl-tRNA(Gln) + L-glutamine + ATP + H2O = L-glutaminyl-tRNA(Gln) + L-glutamate + ADP + phosphate + H(+). The catalysed reaction is L-aspartyl-tRNA(Asn) + L-glutamine + ATP + H2O = L-asparaginyl-tRNA(Asn) + L-glutamate + ADP + phosphate + 2 H(+). In terms of biological role, allows the formation of correctly charged Asn-tRNA(Asn) or Gln-tRNA(Gln) through the transamidation of misacylated Asp-tRNA(Asn) or Glu-tRNA(Gln) in organisms which lack either or both of asparaginyl-tRNA or glutaminyl-tRNA synthetases. The reaction takes place in the presence of glutamine and ATP through an activated phospho-Asp-tRNA(Asn) or phospho-Glu-tRNA(Gln). This chain is Aspartyl/glutamyl-tRNA(Asn/Gln) amidotransferase subunit C, found in Xanthobacter autotrophicus (strain ATCC BAA-1158 / Py2).